Consider the following 582-residue polypeptide: Arginine--tRNA ligase (582 aa).

The 'HIGH' region motif lies at proline 127–histidine 137.

Belongs to the class-I aminoacyl-tRNA synthetase family. As to quaternary structure, monomer.

The protein resides in the cytoplasm. It carries out the reaction tRNA(Arg) + L-arginine + ATP = L-arginyl-tRNA(Arg) + AMP + diphosphate. This chain is Arginine--tRNA ligase, found in Psychromonas ingrahamii (strain DSM 17664 / CCUG 51855 / 37).